The chain runs to 395 residues: Elongation factor Tu (395 aa).

The 195-residue stretch at 10-204 folds into the tr-type G domain; that stretch reads KPHVNVGTIG…AVDEYIPEPV (195 aa). Residues 19–26 form a G1 region; it reads GHVDHGKT. A GTP-binding site is contributed by 19–26; it reads GHVDHGKT. Residue Thr26 participates in Mg(2+) binding. Residues 60–64 are G2; sequence GITIA. Residues 81–84 are G3; it reads DCPG. Residues 81–85 and 136–139 each bind GTP; these read DCPGH and NKVD. Positions 136–139 are G4; it reads NKVD. Residues 174 to 176 form a G5 region; sequence SAL.

This sequence belongs to the TRAFAC class translation factor GTPase superfamily. Classic translation factor GTPase family. EF-Tu/EF-1A subfamily. In terms of assembly, monomer.

The protein localises to the cytoplasm. The catalysed reaction is GTP + H2O = GDP + phosphate + H(+). Its function is as follows. GTP hydrolase that promotes the GTP-dependent binding of aminoacyl-tRNA to the A-site of ribosomes during protein biosynthesis. The chain is Elongation factor Tu from Exiguobacterium sp. (strain ATCC BAA-1283 / AT1b).